The sequence spans 193 residues: Putative zinc finger protein 726P1 (193 aa).

The C2H2-type 1; degenerate zinc finger occupies 18-40; the sequence is YKCKKCGKTFNWSSILTNNKKIH. The C2H2-type 2; atypical zinc-finger motif lies at 46 to 68; sequence YKCEECGKAFKQHSTLTTHKIIC. The C2H2-type 3; degenerate zinc-finger motif lies at 74-96; the sequence is YRCEECGKAFCQPSTLTRYKRMH. A C2H2-type 4 zinc finger spans residues 102–124; the sequence is YKCEECGKAFTQFSTLTKHKRIH. The C2H2-type 5; degenerate zinc-finger motif lies at 130–152; the sequence is YKCEESGKAFIWSSGLTEHRRVH. A C2H2-type 6 zinc finger spans residues 158 to 180; sequence YKCEECGKALIQFSTLTRHKRIH.

The polypeptide is Putative zinc finger protein 726P1 (ZNF726P1) (Homo sapiens (Human)).